A 194-amino-acid chain; its full sequence is MDVNNVELIISAVRPEQYPETDLPEYALAGRSNVGKSSFINTMIRRKSMARISQKPGKTQTLNFYKIEEALFFVDVPGYGFAKVSKTEREKWGVMIETYITSREQLRGVIQIVDLRHKPTEDDRMMYEFLKYYDIPVIVVATKADKIPRSKWQKNAKIVRETLDFDPDDKFVLFSSETKMGKDEAWQFIKEGME.

One can recognise an EngB-type G domain in the interval 22-194; that stretch reads DLPEYALAGR…AWQFIKEGME (173 aa). GTP contacts are provided by residues 30 to 37, 57 to 61, 75 to 78, 142 to 145, and 174 to 176; these read GRSNVGKS, GKTQT, DVPG, TKAD, and FSS. The Mg(2+) site is built by serine 37 and threonine 59.

The protein belongs to the TRAFAC class TrmE-Era-EngA-EngB-Septin-like GTPase superfamily. EngB GTPase family. Requires Mg(2+) as cofactor.

In terms of biological role, necessary for normal cell division and for the maintenance of normal septation. The protein is Probable GTP-binding protein EngB of Listeria monocytogenes serotype 4b (strain CLIP80459).